The chain runs to 55 residues: Large ribosomal subunit protein bL33 (55 aa).

This sequence belongs to the bacterial ribosomal protein bL33 family.

The protein is Large ribosomal subunit protein bL33 of Rhodopseudomonas palustris (strain BisA53).